The sequence spans 225 residues: GrpE protein homolog 2, mitochondrial (225 aa).

The N-terminal 32 residues, 1–32 (MAVRSLWAGRLRVQRLLAWSAAWESKGWPLPF), are a transit peptide targeting the mitochondrion. Lys142 bears the N6-acetyllysine mark.

The protein belongs to the GrpE family. As to quaternary structure, probable component of the PAM complex at least composed of a mitochondrial HSP70 protein, GRPEL1 or GRPEL2, TIMM44, TIMM16/PAM16 and TIMM14/DNAJC19.

Its subcellular location is the mitochondrion matrix. Functionally, essential component of the PAM complex, a complex required for the translocation of transit peptide-containing proteins from the inner membrane into the mitochondrial matrix in an ATP-dependent manner. Seems to control the nucleotide-dependent binding of mitochondrial HSP70 to substrate proteins. Stimulates ATPase activity of mt-HSP70. May also serve to modulate the interconversion of oligomeric (inactive) and monomeric (active) forms of mt-HSP70. This Homo sapiens (Human) protein is GrpE protein homolog 2, mitochondrial (GRPEL2).